A 562-amino-acid chain; its full sequence is NAD-dependent malic enzyme (562 aa).

Tyr101 serves as the catalytic Proton donor. Arg154 contacts NAD(+). Residue Lys172 is the Proton acceptor of the active site. 3 residues coordinate a divalent metal cation: Glu243, Asp244, and Asp267. Residues Asp267 and Asn415 each contribute to the NAD(+) site.

The protein belongs to the malic enzymes family. As to quaternary structure, homotetramer. Mg(2+) is required as a cofactor. The cofactor is Mn(2+).

The catalysed reaction is (S)-malate + NAD(+) = pyruvate + CO2 + NADH. The enzyme catalyses oxaloacetate + H(+) = pyruvate + CO2. The sequence is that of NAD-dependent malic enzyme from Shewanella frigidimarina (strain NCIMB 400).